Reading from the N-terminus, the 371-residue chain is S-adenosylmethionine:tRNA ribosyltransferase-isomerase (371 aa).

The protein belongs to the QueA family. Monomer.

Its subcellular location is the cytoplasm. The enzyme catalyses 7-aminomethyl-7-carbaguanosine(34) in tRNA + S-adenosyl-L-methionine = epoxyqueuosine(34) in tRNA + adenine + L-methionine + 2 H(+). The protein operates within tRNA modification; tRNA-queuosine biosynthesis. In terms of biological role, transfers and isomerizes the ribose moiety from AdoMet to the 7-aminomethyl group of 7-deazaguanine (preQ1-tRNA) to give epoxyqueuosine (oQ-tRNA). The polypeptide is S-adenosylmethionine:tRNA ribosyltransferase-isomerase (Prochlorococcus marinus (strain MIT 9313)).